Consider the following 211-residue polypeptide: LexA repressor (211 aa).

The segment at residues V29–N49 is a DNA-binding region (H-T-H motif). Catalysis depends on for autocatalytic cleavage activity residues S131 and K169.

The protein belongs to the peptidase S24 family. As to quaternary structure, homodimer.

The catalysed reaction is Hydrolysis of Ala-|-Gly bond in repressor LexA.. In terms of biological role, represses a number of genes involved in the response to DNA damage (SOS response), including recA and lexA. In the presence of single-stranded DNA, RecA interacts with LexA causing an autocatalytic cleavage which disrupts the DNA-binding part of LexA, leading to derepression of the SOS regulon and eventually DNA repair. The polypeptide is LexA repressor (Clostridioides difficile (strain 630) (Peptoclostridium difficile)).